The sequence spans 59 residues: Cecropin-A2 (59 aa).

An N-terminal signal peptide occupies residues 1-23; sequence MNFNKLFAIVLLAALVLLGQTEA.

It belongs to the cecropin family.

It localises to the secreted. In terms of biological role, cecropins have lytic and antibacterial activity against several Gram-positive and Gram-negative bacteria. This is Cecropin-A2 (CECA2) from Aedes albopictus (Asian tiger mosquito).